We begin with the raw amino-acid sequence, 134 residues long: Small ribosomal subunit protein bS6 (134 aa).

The segment at 97-134 (TDVSPIKASEGREDRRSAPQREERNHDNSDEVSEESED) is disordered. Positions 105-125 (SEGREDRRSAPQREERNHDNS) are enriched in basic and acidic residues.

This sequence belongs to the bacterial ribosomal protein bS6 family.

In terms of biological role, binds together with bS18 to 16S ribosomal RNA. In Marinomonas sp. (strain MWYL1), this protein is Small ribosomal subunit protein bS6.